We begin with the raw amino-acid sequence, 1056 residues long: Carbamoyl phosphate synthase large chain (1056 aa).

The segment at 1–401 is carboxyphosphate synthetic domain; that stretch reads MPKRTDIHKI…ALHKAVRSLE (401 aa). ATP is bound by residues R129, R169, G175, G176, K208, I210, E215, G241, I242, H243, Q284, and E298. The ATP-grasp 1 domain maps to 133–327; sequence KELMNELGEP…IAKMAAKIAV (195 aa). 3 residues coordinate Mg(2+): Q284, E298, and N300. Q284, E298, and N300 together coordinate Mn(2+). The interval 402 to 546 is oligomerization domain; sequence IDEKDLFSAE…YSAYDHENES (145 aa). Positions 547-929 are carbamoyl phosphate synthetic domain; the sequence is QRTKKPSILV…ALHKAFSGAH (383 aa). The ATP-grasp 2 domain occupies 671–861; sequence DQVITDLNLK…MAQVATRVIL (191 aa). ATP-binding residues include R707, A746, L748, E752, G777, V778, H779, S780, Q820, and E832. Mg(2+)-binding residues include Q820, E832, and N834. Residues Q820, E832, and N834 each contribute to the Mn(2+) site. The region spanning 930 to 1056 is the MGS-like domain; it reads IQVPNDGKIL…DQSLEAITIK (127 aa). Positions 930 to 1056 are allosteric domain; the sequence is IQVPNDGKIL…DQSLEAITIK (127 aa).

It belongs to the CarB family. In terms of assembly, composed of two chains; the small (or glutamine) chain promotes the hydrolysis of glutamine to ammonia, which is used by the large (or ammonia) chain to synthesize carbamoyl phosphate. Tetramer of heterodimers (alpha,beta)4. The cofactor is Mg(2+). It depends on Mn(2+) as a cofactor.

The catalysed reaction is hydrogencarbonate + L-glutamine + 2 ATP + H2O = carbamoyl phosphate + L-glutamate + 2 ADP + phosphate + 2 H(+). It carries out the reaction hydrogencarbonate + NH4(+) + 2 ATP = carbamoyl phosphate + 2 ADP + phosphate + 2 H(+). The protein operates within amino-acid biosynthesis; L-arginine biosynthesis; carbamoyl phosphate from bicarbonate: step 1/1. It functions in the pathway pyrimidine metabolism; UMP biosynthesis via de novo pathway; (S)-dihydroorotate from bicarbonate: step 1/3. Functionally, large subunit of the glutamine-dependent carbamoyl phosphate synthetase (CPSase). CPSase catalyzes the formation of carbamoyl phosphate from the ammonia moiety of glutamine, carbonate, and phosphate donated by ATP, constituting the first step of 2 biosynthetic pathways, one leading to arginine and/or urea and the other to pyrimidine nucleotides. The large subunit (synthetase) binds the substrates ammonia (free or transferred from glutamine from the small subunit), hydrogencarbonate and ATP and carries out an ATP-coupled ligase reaction, activating hydrogencarbonate by forming carboxy phosphate which reacts with ammonia to form carbamoyl phosphate. This Limosilactobacillus reuteri (strain DSM 20016) (Lactobacillus reuteri) protein is Carbamoyl phosphate synthase large chain.